Here is a 3416-residue protein sequence, read N- to C-terminus: Genome polyprotein (3416 aa).

The interval 1–34 (MAKGAVLKGKGGGPPRRVPKETAKKTRQGPGRLP) is disordered. Topologically, residues 1 to 99 (MAKGAVLKGK…NRRRGKRRST (99 aa)) are cytoplasmic. A propeptide spans 97 to 117 (RSTTGLLTSILLACLATLVIS) (ER anchor for the capsid protein C, removed in mature form by serine protease NS3). A helical transmembrane segment spans residues 100–120 (TGLLTSILLACLATLVISATI). The Extracellular segment spans residues 121-243 (RRERTGDMVI…HLTRVEGWVW (123 aa)). The N-linked (GlcNAc...) asparagine; by host glycan is linked to asparagine 145. Residues 244–261 (KNKLLTMAFCAVVWMVTD) form a helical membrane-spanning segment. A topological domain (cytoplasmic) is located at residue serine 262. Residues 263 to 281 (LPTRFIVITVALCLAPTYA) form a helical membrane-spanning segment. Topologically, residues 282–728 (TRCTHLQNRD…HTAFGAAFNT (447 aa)) are extracellular. 6 disulfide bridges follow: cysteine 284–cysteine 311, cysteine 341–cysteine 397, cysteine 341–cysteine 402, cysteine 355–cysteine 386, cysteine 373–cysteine 397, and cysteine 373–cysteine 402. The segment at 379–392 (DRGWGNHCGLFGKG) is fusion peptide. The N-linked (GlcNAc...) asparagine; by host glycan is linked to asparagine 435. Intrachain disulfides connect cysteine 467–cysteine 571 and cysteine 588–cysteine 619. Residues 729 to 749 (IFGGVGFLPRILLGVALAWLG) traverse the membrane as a helical segment. The Cytoplasmic portion of the chain corresponds to 750–756 (LNSRNPT). A helical transmembrane segment spans residues 757 to 777 (LSVGFLITGGLVLTMTLGVGA). Topologically, residues 778–1134 (DMGCAIDANR…RSMVLADNGA (357 aa)) are extracellular. Cystine bridges form between cysteine 781–cysteine 792, cysteine 832–cysteine 922, cysteine 957–cysteine 1002, cysteine 1059–cysteine 1108, cysteine 1070–cysteine 1092, and cysteine 1091–cysteine 1095. Asparagine 862, asparagine 985, and asparagine 1001 each carry an N-linked (GlcNAc...) asparagine; by host glycan. A helical membrane pass occupies residues 1135–1155 (MLSEGGVPGIVAVFVVLELVI). The Cytoplasmic segment spans residues 1156–1162 (RRRPTTG). Residues 1163-1183 (TSVVWCGVVVLGLVVTGLVTI) form a helical membrane-spanning segment. Residues 1184–1189 (EGLCRY) lie on the Lumenal side of the membrane. A helical membrane pass occupies residues 1190–1210 (VVAVGILMSMELGPEIVALVL). Residues 1211-1235 (LQAVFDMRTGLLVAFAVKRAYTTRE) are Cytoplasmic-facing. Residues 1236 to 1256 (AVVTYFLLLVLELGFPEASLS) form a helical membrane-spanning segment. Residues 1257-1295 (NIWKWADSLAMGTLILQACSQEGRARVGYLLAAMMTQKD) are Lumenal-facing. The helical transmembrane segment at 1296–1316 (MAIIHTGLTIFLSAATAMAVW) threads the bilayer. Residues 1317–1361 (SMIKGQRDQKGLSWATPLVGLFGGEGVGLRLLAFRRLAERRNRRS) are Cytoplasmic-facing. The chain crosses the membrane as a helical span at residues 1362-1379 (FSEPLTVVGVMLTVASGM). Over 1380–1384 (VRHTS) the chain is Lumenal. A helical transmembrane segment spans residues 1385–1405 (QEALCALVAGAFLLLMMVLGT). Over 1406-1458 (RKMQLIAEWCGEVEWNPDLVNEGGEVNLKVRQDAMGNLHLTEVEKEERAMALW) the chain is Cytoplasmic. Residues 1412–1451 (AEWCGEVEWNPDLVNEGGEVNLKVRQDAMGNLHLTEVEKE) are interacts with and activates NS3 protease. Positions 1459 to 1479 (LLAGLVASAFHWAGILIVLAI) form an intramembrane region, helical. Topologically, residues 1480 to 2162 (WTFFEMLSSG…RMAERDAPEA (683 aa)) are cytoplasmic. The Peptidase S7 domain maps to 1492–1671 (SELVFSGQGT…EAEKSRPELP (180 aa)). Catalysis depends on charge relay system; for serine protease NS3 activity residues histidine 1545, aspartate 1569, and serine 1629. Positions 1677–1833 (TGWMSKGQIT…ESNGAIMSEE (157 aa)) constitute a Helicase ATP-binding domain. Position 1690–1697 (1690–1697 (MHPGSGKT)) interacts with ATP. The DEAH box signature appears at 1781 to 1784 (DEAH). One can recognise a Helicase C-terminal domain in the interval 1844–2002 (GFDWITEYEG…TLRGPVATFY (159 aa)). The residue at position 1885 (lysine 1885) is an N6-acetyllysine; by host. Residues 2163-2183 (FLTIVEVAVLGVATLGILWCF) traverse the membrane as a helical segment. The Lumenal portion of the chain corresponds to 2184 to 2191 (VARTSVSR). Positions 2192–2211 (MFLGTVVLFAALLLLWIGGV) form an intramembrane region, helical. A topological domain (lumenal) is located at residue aspartate 2212. The helical transmembrane segment at 2213 to 2233 (YGYMAGIALIFYIFLTVLQPE) threads the bilayer. The Cytoplasmic segment spans residues 2234–2246 (PGKQRSSDDNRLA). Residues 2247–2267 (YFLLGLLSLAGLVTANEMGML) traverse the membrane as a helical segment. Topologically, residues 2268–2301 (DKTKADLAGLMWHGEQRHPAWEEWTNVDIQPARS) are lumenal. Residues 2302–2322 (WGTYVLIVSLFTPYMLHQLQT) constitute an intramembrane region (helical). The Lumenal segment spans residues 2323–2345 (KIQQLVNSSVASGAQAMRDLGGG). Residues 2346 to 2366 (TPFFGVAGHVIALGVTSLVGA) constitute an intramembrane region (helical). At 2367–2368 (TP) the chain is on the lumenal side. The chain crosses the membrane as a helical span at residues 2369-2389 (LSLGLGVALAAFHLAIVASGL). At 2390 to 2432 (EAELTQRAHRVFFSAMVKNPMVDGDVINPFPDGEPKPVLYERR) the chain is on the cytoplasmic side. Residues 2433 to 2453 (MSLILAIALCMVSVVLNRTAA) traverse the membrane as a helical segment. Residues 2454-2476 (SMTEAGAVGLAALGQLVHPETET) are Lumenal-facing. A helical transmembrane segment spans residues 2477-2497 (LWTMPMACGMAGLVRGSFWGL). The Cytoplasmic segment spans residues 2498–3416 (LPMGHRLWLK…WDLKLESNII (919 aa)). Positions 2514–2778 (GGADGETLGD…EVDLGTGTRC (265 aa)) constitute an mRNA cap 0-1 NS5-type MT domain. Serine 2569 serves as a coordination point for S-adenosyl-L-methionine. Serine 2569 carries the post-translational modification Phosphoserine. The For 2'-O-MTase activity role is filled by lysine 2574. S-adenosyl-L-methionine-binding residues include glycine 2599, tryptophan 2600, threonine 2617, isoleucine 2618, aspartate 2644, and valine 2645. Aspartate 2659 acts as the For 2'-O-MTase activity in catalysis. Isoleucine 2660 serves as a coordination point for S-adenosyl-L-methionine. Residues lysine 2696 and glutamate 2732 each act as for 2'-O-MTase activity in the active site. The interaction with host SCRIB stretch occupies residues 2732–2736 (EMYFS). Position 2734 (tyrosine 2734) interacts with S-adenosyl-L-methionine. 4 residues coordinate Zn(2+): glutamate 2952, histidine 2956, cysteine 2961, and cysteine 2964. Residues 3042-3191 (GLFYADDTAG…RPIDDRFGKA (150 aa)) form the RdRp catalytic domain. The Zn(2+) site is built by histidine 3226, cysteine 3242, and cysteine 3361.

The protein in the N-terminal section; belongs to the class I-like SAM-binding methyltransferase superfamily. mRNA cap 0-1 NS5-type methyltransferase family. As to quaternary structure, homodimer. Interacts (via N-terminus) with host EXOC1 (via C-terminus); this interaction results in EXOC1 degradation through the proteasome degradation pathway. In terms of assembly, forms heterodimers with envelope protein E in the endoplasmic reticulum and Golgi. Homodimer; in the endoplasmic reticulum and Golgi. Interacts with protein prM. Interacts with non-structural protein 1. As to quaternary structure, homodimer; Homohexamer when secreted. Interacts with envelope protein E. In terms of assembly, interacts (via N-terminus) with serine protease NS3. Forms a heterodimer with serine protease NS3. May form homooligomers. As to quaternary structure, forms a heterodimer with NS2B. Interacts with NS4B. Interacts with unphosphorylated RNA-directed RNA polymerase NS5; this interaction stimulates RNA-directed RNA polymerase NS5 guanylyltransferase activity. In terms of assembly, interacts with serine protease NS3. Homodimer. Interacts with host STAT2; this interaction inhibits the phosphorylation of the latter, and, when all viral proteins are present (polyprotein), targets STAT2 for degradation. Interacts with serine protease NS3. In terms of processing, specific enzymatic cleavages in vivo yield mature proteins. Cleavages in the lumen of endoplasmic reticulum are performed by host signal peptidase, whereas cleavages in the cytoplasmic side are performed by serine protease NS3. Signal cleavage at the 2K-4B site requires a prior NS3 protease-mediated cleavage at the 4A-2K site. Cleaved in post-Golgi vesicles by a host furin, releasing the mature small envelope protein M, and peptide pr. This cleavage is incomplete as up to 30% of viral particles still carry uncleaved prM. Post-translationally, N-glycosylated. In terms of processing, N-glycosylated. The excreted form is glycosylated and this is required for efficient secretion of the protein from infected cells. Acetylated by host KAT5. Acetylation modulates NS3 RNA-binding and unwinding activities and plays an important positive role for viral replication. Post-translationally, phosphorylated on serines residues. This phosphorylation may trigger NS5 nuclear localization.

It is found in the virion. The protein resides in the host nucleus. The protein localises to the host cytoplasm. It localises to the host perinuclear region. Its subcellular location is the secreted. It is found in the virion membrane. The protein resides in the host endoplasmic reticulum membrane. The catalysed reaction is Selective hydrolysis of -Xaa-Xaa-|-Yaa- bonds in which each of the Xaa can be either Arg or Lys and Yaa can be either Ser or Ala.. The enzyme catalyses RNA(n) + a ribonucleoside 5'-triphosphate = RNA(n+1) + diphosphate. It catalyses the reaction a ribonucleoside 5'-triphosphate + H2O = a ribonucleoside 5'-diphosphate + phosphate + H(+). It carries out the reaction ATP + H2O = ADP + phosphate + H(+). The catalysed reaction is a 5'-end (5'-triphosphoguanosine)-ribonucleoside in mRNA + S-adenosyl-L-methionine = a 5'-end (N(7)-methyl 5'-triphosphoguanosine)-ribonucleoside in mRNA + S-adenosyl-L-homocysteine. The enzyme catalyses a 5'-end (N(7)-methyl 5'-triphosphoguanosine)-ribonucleoside in mRNA + S-adenosyl-L-methionine = a 5'-end (N(7)-methyl 5'-triphosphoguanosine)-(2'-O-methyl-ribonucleoside) in mRNA + S-adenosyl-L-homocysteine + H(+). Plays a role in virus budding by binding to the cell membrane and gathering the viral RNA into a nucleocapsid that forms the core of a mature virus particle. During virus entry, may induce genome penetration into the host cytoplasm after hemifusion induced by the surface proteins. Can migrate to the cell nucleus where it modulates host functions. In terms of biological role, inhibits RNA silencing by interfering with host Dicer. Its function is as follows. Prevents premature fusion activity of envelope proteins in trans-Golgi by binding to envelope protein E at pH6.0. After virion release in extracellular space, gets dissociated from E dimers. Functionally, acts as a chaperone for envelope protein E during intracellular virion assembly by masking and inactivating envelope protein E fusion peptide. prM is the only viral peptide matured by host furin in the trans-Golgi network probably to avoid catastrophic activation of the viral fusion activity in acidic Golgi compartment prior to virion release. prM-E cleavage is inefficient, and many virions are only partially matured. These uncleaved prM would play a role in immune evasion. May play a role in virus budding. Exerts cytotoxic effects by activating a mitochondrial apoptotic pathway through M ectodomain. May display a viroporin activity. In terms of biological role, binds to host cell surface receptor and mediates fusion between viral and cellular membranes. Envelope protein is synthesized in the endoplasmic reticulum in the form of heterodimer with protein prM. They play a role in virion budding in the ER, and the newly formed immature particle is covered with 60 spikes composed of heterodimer between precursor prM and envelope protein E. The virion is transported to the Golgi apparatus where the low pH causes dissociation of PrM-E heterodimers and formation of E homodimers. prM-E cleavage is inefficient, and many virions are only partially matured. These uncleaved prM would play a role in immune evasion. Its function is as follows. Involved in immune evasion, pathogenesis and viral replication. Once cleaved off the polyprotein, is targeted to three destinations: the viral replication cycle, the plasma membrane and the extracellular compartment. Essential for viral replication. Required for formation of the replication complex and recruitment of other non-structural proteins to the ER-derived membrane structures. Excreted as a hexameric lipoparticle that plays a role against host immune response. Antagonizing the complement function. Binds to the host macrophages and dendritic cells. Inhibits signal transduction originating from Toll-like receptor 3 (TLR3). Functionally, component of the viral RNA replication complex that functions in virion assembly and antagonizes the host immune response. Required cofactor for the serine protease function of NS3. May have membrane-destabilizing activity and form viroporins. In terms of biological role, displays three enzymatic activities: serine protease, NTPase and RNA helicase. NS3 serine protease, in association with NS2B, performs its autocleavage and cleaves the polyprotein at dibasic sites in the cytoplasm: C-prM, NS2A-NS2B, NS2B-NS3, NS3-NS4A, NS4A-2K and NS4B-NS5. NS3 RNA helicase binds RNA and unwinds dsRNA in the 3' to 5' direction. Its function is as follows. Regulates the ATPase activity of the NS3 helicase activity. NS4A allows NS3 helicase to conserve energy during unwinding. Functionally, functions as a signal peptide for NS4B and is required for the interferon antagonism activity of the latter. Induces the formation of ER-derived membrane vesicles where the viral replication takes place. Inhibits interferon (IFN)-induced host STAT1 phosphorylation and nuclear translocation, thereby preventing the establishment of cellular antiviral state by blocking the IFN-alpha/beta pathway. Inhibits STAT2 translocation in the nucleus after IFN-alpha treatment. In terms of biological role, replicates the viral (+) and (-) RNA genome, and performs the capping of genomes in the cytoplasm. NS5 methylates viral RNA cap at guanine N-7 and ribose 2'-O positions. Besides its role in RNA genome replication, also prevents the establishment of cellular antiviral state by blocking the interferon-alpha/beta (IFN-alpha/beta) signaling pathway. Inhibits host TYK2 and STAT2 phosphorylation, thereby preventing activation of JAK-STAT signaling pathway. The chain is Genome polyprotein from Homo sapiens (Human).